The primary structure comprises 275 residues: Large ribosomal subunit protein uL2 (275 aa).

2 disordered regions span residues 24 to 54 (LYKG…VRHQ) and 223 to 275 (VAMN…RHKR). Basic and acidic residues-rich tracts occupy residues 25–38 (YKGR…EKKT) and 229–241 (DHPH…RTGE).

This sequence belongs to the universal ribosomal protein uL2 family. In terms of assembly, part of the 50S ribosomal subunit. Forms a bridge to the 30S subunit in the 70S ribosome.

Its function is as follows. One of the primary rRNA binding proteins. Required for association of the 30S and 50S subunits to form the 70S ribosome, for tRNA binding and peptide bond formation. It has been suggested to have peptidyltransferase activity; this is somewhat controversial. Makes several contacts with the 16S rRNA in the 70S ribosome. The protein is Large ribosomal subunit protein uL2 of Azoarcus sp. (strain BH72).